A 1114-amino-acid polypeptide reads, in one-letter code: Putative surface protein SAV2496/SAV2497 (1114 aa).

A signal peptide spans 1 to 50 (MRDKKGPVNKRVDFLSNKLNKYSIRKFTVGTASILIGSLMYLGTQQEAEA). Disordered stretches follow at residues 76–116 (TNKD…EDTP), 440–473 (KFNP…NPLT), and 496–1088 (EYGP…TGLE). Basic and acidic residues-rich tracts occupy residues 96-116 (DTIE…EDTP), 451-461 (KVTREGQKGEK), 505-523 (GHRD…EEVP), 554-570 (SIVE…RKFN), and 579-589 (KVTREGQKGEK). The G5 1 domain maps to 419-501 (SAKNNNRIRK…NELTEYGPET (83 aa)). The 82-residue stretch at 547–628 (YGPVKGDSIV…NELTEYGPET (82 aa)) folds into the G5 2 domain. Low complexity predominate over residues 590-604 (TTTPTLKNPLTGEII). 11 stretches are compositionally biased toward basic and acidic residues: residues 605–618 (SKGE…KDPI), 632–650 (GHRD…EEVP), 681–697 (SIVE…RKFN), 706–716 (KVTREGQKGEK), 733–746 (SKGE…KDPI), 760–778 (GHRD…EEVP), 809–825 (SIVE…RKFN), 834–844 (KVTREGQKGEK), 861–874 (SKGE…KDPV), 918–929 (KVIEEPVDDVIK), and 946–965 (FETK…RVKQ). Positions 674–756 (YGPVKGDSIV…NELTEYGPET (83 aa)) constitute a G5 3 domain. The G5 4 domain maps to 802-884 (YGPVKGDSIV…NELTEFGGEK (83 aa)). Residues 930–1012 (HGPKTGTPET…DKIVEFGGEK (83 aa)) enclose the G5 5 domain. A compositionally biased stretch (polar residues) spans 968–982 (QPGSKTITTPITVNP). Positions 996-1026 (EITKQPVDKIVEFGGEKPKDPKGPENPEKPS) are enriched in basic and acidic residues. The short motif at 1082–1086 (LPKTG) is the LPXTG sorting signal element. Residue Thr1085 is modified to Pentaglycyl murein peptidoglycan amidated threonine. A propeptide spans 1086–1114 (GLESTQKGLIFSSIIGIAGLMLLARRRKN) (removed by sortase).

The protein localises to the secreted. It is found in the cell wall. In Staphylococcus aureus (strain Mu50 / ATCC 700699), this protein is Putative surface protein SAV2496/SAV2497.